A 381-amino-acid polypeptide reads, in one-letter code: Creatine kinase M-type (381 aa).

The 88-residue stretch at 11–98 (KLNYKSEEEY…FDPIIQDRHG (88 aa)) folds into the Phosphagen kinase N-terminal domain. In terms of domain architecture, Phosphagen kinase C-terminal spans 125-367 (YVLSSRVRTG…KLMVEMEKKL (243 aa)). 128–132 (SSRVR) serves as a coordination point for ATP. Ser-164 bears the Phosphoserine mark. Thr-166 is modified (phosphothreonine). At Ser-178 the chain carries Phosphoserine. The residue at position 180 (Thr-180) is a Phosphothreonine. His-191 is a binding site for ATP. Ser-199 bears the Phosphoserine mark. Residues Arg-236 and Arg-292 each contribute to the ATP site. Phosphothreonine occurs at positions 313 and 322. 320–325 (RGTGGV) is a binding site for ATP. Residue Ser-372 is modified to Phosphoserine.

Belongs to the ATP:guanido phosphotransferase family. As to quaternary structure, dimer of identical or non-identical chains, which can be either B (brain type) or M (muscle type). With MM being the major form in skeletal muscle and myocardium, MB existing in myocardium, and BB existing in many tissues, especially brain.

It carries out the reaction creatine + ATP = N-phosphocreatine + ADP + H(+). Reversibly catalyzes the transfer of phosphate between ATP and various phosphogens (e.g. creatine phosphate). Creatine kinase isoenzymes play a central role in energy transduction in tissues with large, fluctuating energy demands, such as skeletal muscle, heart, brain and spermatozoa. In Oryctolagus cuniculus (Rabbit), this protein is Creatine kinase M-type (CKM).